The following is a 294-amino-acid chain: uncharacterized protein (294 aa).

The N-terminal stretch at 1–18 is a signal peptide; sequence MKKLLLIITVFFTCSAVA.

This is an uncharacterized protein from Rickettsia bellii (strain RML369-C).